Here is a 161-residue protein sequence, read N- to C-terminus: Large ribosomal subunit protein eL21 (161 aa).

This sequence belongs to the eukaryotic ribosomal protein eL21 family.

This is Large ribosomal subunit protein eL21 (rpl-21) from Caenorhabditis elegans.